We begin with the raw amino-acid sequence, 132 residues long: Small ribosomal subunit protein uS8 (132 aa).

It belongs to the universal ribosomal protein uS8 family. In terms of assembly, part of the 30S ribosomal subunit. Contacts proteins S5 and S12.

One of the primary rRNA binding proteins, it binds directly to 16S rRNA central domain where it helps coordinate assembly of the platform of the 30S subunit. The sequence is that of Small ribosomal subunit protein uS8 from Acidobacterium capsulatum (strain ATCC 51196 / DSM 11244 / BCRC 80197 / JCM 7670 / NBRC 15755 / NCIMB 13165 / 161).